The sequence spans 349 residues: Hydroxymethylglutaryl-CoA synthase (349 aa).

(3S)-3-hydroxy-3-methylglutaryl-CoA-binding residues include aspartate 30 and alanine 31. The Proton donor/acceptor role is filled by glutamate 82. Positions 114 and 155 each coordinate (3S)-3-hydroxy-3-methylglutaryl-CoA. The active-site Acyl-thioester intermediate is cysteine 114. CoA is bound at residue arginine 203. 2 residues coordinate (3S)-3-hydroxy-3-methylglutaryl-CoA: threonine 205 and histidine 238. Histidine 238 (proton donor/acceptor) is an active-site residue. Lysine 243 contributes to the CoA binding site. Residues asparagine 270 and serine 300 each coordinate (3S)-3-hydroxy-3-methylglutaryl-CoA.

This sequence belongs to the thiolase-like superfamily. Archaeal HMG-CoA synthase family. In terms of assembly, interacts with acetoacetyl-CoA thiolase that catalyzes the precedent step in the pathway and with a DUF35 protein. The acetoacetyl-CoA thiolase/HMG-CoA synthase complex channels the intermediate via a fused CoA-binding site, which allows for efficient coupling of the endergonic thiolase reaction with the exergonic HMGCS reaction.

The enzyme catalyses acetoacetyl-CoA + acetyl-CoA + H2O = (3S)-3-hydroxy-3-methylglutaryl-CoA + CoA + H(+). The protein operates within metabolic intermediate biosynthesis; (R)-mevalonate biosynthesis; (R)-mevalonate from acetyl-CoA: step 2/3. In terms of biological role, catalyzes the condensation of acetyl-CoA with acetoacetyl-CoA to form 3-hydroxy-3-methylglutaryl-CoA (HMG-CoA). Functions in the mevalonate (MVA) pathway leading to isopentenyl diphosphate (IPP), a key precursor for the biosynthesis of isoprenoid compounds that are building blocks of archaeal membrane lipids. The sequence is that of Hydroxymethylglutaryl-CoA synthase from Methanococcus maripaludis (strain C5 / ATCC BAA-1333).